The sequence spans 151 residues: Large ribosomal subunit protein bL9 (151 aa).

The protein belongs to the bacterial ribosomal protein bL9 family.

In terms of biological role, binds to the 23S rRNA. In Bordetella avium (strain 197N), this protein is Large ribosomal subunit protein bL9.